The following is a 271-amino-acid chain: Formamidopyrimidine-DNA glycosylase (271 aa).

The Schiff-base intermediate with DNA role is filled by P2. The active-site Proton donor is E3. The active-site Proton donor; for beta-elimination activity is K58. 2 residues coordinate DNA: R110 and R152. The segment at 237-271 (AVYGQTGKPCTVCGTPIARIRLGNRSTWFCPVCQK) adopts an FPG-type zinc-finger fold. R261 (proton donor; for delta-elimination activity) is an active-site residue.

Belongs to the FPG family. In terms of assembly, monomer. It depends on Zn(2+) as a cofactor.

It catalyses the reaction Hydrolysis of DNA containing ring-opened 7-methylguanine residues, releasing 2,6-diamino-4-hydroxy-5-(N-methyl)formamidopyrimidine.. The enzyme catalyses 2'-deoxyribonucleotide-(2'-deoxyribose 5'-phosphate)-2'-deoxyribonucleotide-DNA = a 3'-end 2'-deoxyribonucleotide-(2,3-dehydro-2,3-deoxyribose 5'-phosphate)-DNA + a 5'-end 5'-phospho-2'-deoxyribonucleoside-DNA + H(+). In terms of biological role, involved in base excision repair of DNA damaged by oxidation or by mutagenic agents. Acts as a DNA glycosylase that recognizes and removes damaged bases. Has a preference for oxidized purines, such as 7,8-dihydro-8-oxoguanine (8-oxoG). Has AP (apurinic/apyrimidinic) lyase activity and introduces nicks in the DNA strand. Cleaves the DNA backbone by beta-delta elimination to generate a single-strand break at the site of the removed base with both 3'- and 5'-phosphates. This Geobacter sulfurreducens (strain ATCC 51573 / DSM 12127 / PCA) protein is Formamidopyrimidine-DNA glycosylase.